Reading from the N-terminus, the 66-residue chain is MKPSEIREMSIEEIDEKIRQLRLELAKERGMLTMGTSTENPMVIRNLRRDIARLLTIKKEKLREKR.

The protein belongs to the universal ribosomal protein uL29 family.

The polypeptide is Large ribosomal subunit protein uL29 (Thermococcus gammatolerans (strain DSM 15229 / JCM 11827 / EJ3)).